A 146-amino-acid polypeptide reads, in one-letter code: Hemoglobin subunit beta (146 aa).

Val-1 is modified (N-acetylvaline; partial). The 145-residue stretch at 2–146 (HLTDAEKAAV…VANALAHKYH (145 aa)) folds into the Globin domain. Thr-12 bears the Phosphothreonine mark. Lys-59 is subject to N6-acetyllysine. Residue His-63 coordinates heme b. An N6-acetyllysine modification is found at Lys-82. His-92 provides a ligand contact to heme b. Cys-93 bears the S-nitrosocysteine mark. Residue Lys-144 is modified to N6-acetyllysine.

It belongs to the globin family. As to quaternary structure, heterotetramer of two alpha chains and two beta chains. As to expression, red blood cells.

Functionally, involved in oxygen transport from the lung to the various peripheral tissues. This Procavia capensis habessinica (Abyssinian hyrax) protein is Hemoglobin subunit beta (HBB).